The sequence spans 181 residues: Large ribosomal subunit protein uL10 (181 aa).

Belongs to the universal ribosomal protein uL10 family. Part of the ribosomal stalk of the 50S ribosomal subunit. The N-terminus interacts with L11 and the large rRNA to form the base of the stalk. The C-terminus forms an elongated spine to which L12 dimers bind in a sequential fashion forming a multimeric L10(L12)X complex.

Its function is as follows. Forms part of the ribosomal stalk, playing a central role in the interaction of the ribosome with GTP-bound translation factors. The polypeptide is Large ribosomal subunit protein uL10 (Chloroflexus aggregans (strain MD-66 / DSM 9485)).